The chain runs to 319 residues: Cobalamin biosynthesis protein CobD (319 aa).

A run of 5 helical transmembrane segments spans residues 56–76, 78–98, 153–173, 204–224, and 296–316; these read VMWL…LALA, GIHP…ALAG, VDGI…LAMA, VANF…AVLC, and LMWV…YWLV.

This sequence belongs to the CobD/CbiB family.

The protein resides in the cell membrane. Its pathway is cofactor biosynthesis; adenosylcobalamin biosynthesis. Its function is as follows. Converts cobyric acid to cobinamide by the addition of aminopropanol on the F carboxylic group. The polypeptide is Cobalamin biosynthesis protein CobD (Klebsiella pneumoniae subsp. pneumoniae (strain ATCC 700721 / MGH 78578)).